We begin with the raw amino-acid sequence, 546 residues long: DDB1- and CUL4-associated factor 11 (546 aa).

Positions 1 to 19 are enriched in low complexity; the sequence is MGSRNSSSAGSGSGDPSEG. Positions 1–40 are disordered; that stretch reads MGSRNSSSAGSGSGDPSEGLPRRGAGLRRSEEEEEEDEDV. A phosphoserine mark is found at L49 and S75. 7 WD repeats span residues 170 to 210, 216 to 258, 263 to 302, 305 to 345, 353 to 392, 435 to 480, and 481 to 520; these read SYSQ…RKFK, DVGW…TALD, ERRFAVFSIAVSSDGREVLGGANDGCLYVFDREQNRRTLQ, SHED…EDDP, GHQDGITFIDSKGDARYLISNSKDQTIKLWDIRRFSSREG, GVLH…KKLT, and NHKACVRDVSWHPFEEKIVSSSWDGNLRLWQYRQAEYFQD. The segment at 523–546 is disordered; sequence PESEECASAPAPVPQSSTPFSSPQ. Residues 536-546 are compositionally biased toward polar residues; that stretch reads PQSSTPFSSPQ.

In terms of assembly, interacts with DDB1 and CUL4A.

It functions in the pathway protein modification; protein ubiquitination. Functionally, may function as a substrate receptor for CUL4-DDB1 E3 ubiquitin-protein ligase complex. The polypeptide is DDB1- and CUL4-associated factor 11 (DCAF11) (Homo sapiens (Human)).